The primary structure comprises 254 residues: tRNA (guanine-N(1)-)-methyltransferase (254 aa).

S-adenosyl-L-methionine contacts are provided by residues Gly-113 and 133-138; that span reads LGDFVL.

This sequence belongs to the RNA methyltransferase TrmD family. As to quaternary structure, homodimer.

It localises to the cytoplasm. It carries out the reaction guanosine(37) in tRNA + S-adenosyl-L-methionine = N(1)-methylguanosine(37) in tRNA + S-adenosyl-L-homocysteine + H(+). Specifically methylates guanosine-37 in various tRNAs. The sequence is that of tRNA (guanine-N(1)-)-methyltransferase from Herpetosiphon aurantiacus (strain ATCC 23779 / DSM 785 / 114-95).